Consider the following 244-residue polypeptide: Acetylglutamate kinase (244 aa).

Substrate is bound by residues 40 to 41 (GG), R62, and N155.

The protein belongs to the acetylglutamate kinase family. ArgB subfamily.

The protein resides in the cytoplasm. It catalyses the reaction N-acetyl-L-glutamate + ATP = N-acetyl-L-glutamyl 5-phosphate + ADP. The protein operates within amino-acid biosynthesis; L-arginine biosynthesis; N(2)-acetyl-L-ornithine from L-glutamate: step 2/4. Its function is as follows. Catalyzes the ATP-dependent phosphorylation of N-acetyl-L-glutamate. This is Acetylglutamate kinase from Leuconostoc mesenteroides subsp. mesenteroides (strain ATCC 8293 / DSM 20343 / BCRC 11652 / CCM 1803 / JCM 6124 / NCDO 523 / NBRC 100496 / NCIMB 8023 / NCTC 12954 / NRRL B-1118 / 37Y).